Consider the following 439-residue polypeptide: Lactamase-like protein nscB (439 aa).

Residues histidine 214, histidine 216, aspartate 218, and histidine 219 each coordinate Zn(2+). Aspartate 218 serves as the catalytic Proton donor/acceptor.

It belongs to the metallo-beta-lactamase superfamily. The cofactor is Zn(2+).

Its pathway is secondary metabolite biosynthesis. Lactamase-like protein; part of the gene cluster that mediates the biosynthesis of neosartoricin B, a prenylated anthracenone that probably exhibits T-cell antiproliferative activity, suggestive of a physiological role as an immunosuppressive agent. The non-reducing polyketide synthase nscA probably synthesizes and cyclizes the decaketide backbone. The hydrolase nscB then mediates the product release through hydrolysis followed by spontaneous decarboxylation. The prenyltransferase nscD catalyzes the addition of the dimethylallyl group to the aromatic C5. The FAD-dependent monooxygenase nscC is then responsible for the stereospecific hydroxylation at C2. Neosartoricin B can be converted into two additional compounds neosartoricins C and D. Neosartoricin C is a spirocyclic compound that is cyclized through the attack of C3 hydroxyl on C14, followed by dehydration. On the other hand, neosartoricin D is a further cyclized compound in which attack of C2 on C14 in neosartoricin C results in the formation of the acetal-containing dioxabicyclo-octanone ring. Both of these compounds are novel and possibly represent related metabolites of the gene cluster. The polypeptide is Lactamase-like protein nscB (Arthroderma benhamiae (strain ATCC MYA-4681 / CBS 112371) (Trichophyton mentagrophytes)).